Reading from the N-terminus, the 918-residue chain is Plasma membrane ATPase 1 (918 aa).

A compositionally biased stretch (low complexity) spans 1–18 (MTDTSSSSSSSSASSVSA). Residues 1–84 (MTDTSSSSSS…VPEEYLQTDP (84 aa)) form a disordered region. At 1–115 (MTDTSSSSSS…ADEKESLVVK (115 aa)) the chain is on the cytoplasmic side. Residues 33–47 (AASESSDDDDIDALI) show a composition bias toward acidic residues. Ser-61 is subject to Phosphoserine. A helical transmembrane segment spans residues 116–136 (FVMFFVGPIQFVMEAAAILAA). Residues 137–140 (GLSD) are Extracellular-facing. Residues 141–160 (WVDFGVICGLLMLNAGVGFV) traverse the membrane as a helical segment. Residues 161–291 (QEFQAGSIVD…GQGHFTEVLN (131 aa)) lie on the Cytoplasmic side of the membrane. Residue Thr-175 is modified to Phosphothreonine. Lys-252 participates in a covalent cross-link: Glycyl lysine isopeptide (Lys-Gly) (interchain with G-Cter in ubiquitin). Residues 292–313 (GIGIILLVLVIATLLLVWTACF) traverse the membrane as a helical segment. Over 314-325 (YRTNGIVRILRY) the chain is Extracellular. A helical transmembrane segment spans residues 326–347 (TLGITIIGVPVGLPAVVTTTMA). Residues 348 to 719 (VGAAYLAKKQ…IAILDNSLDI (372 aa)) are Cytoplasmic-facing. The 4-aspartylphosphate intermediate role is filled by Asp-378. Residue Lys-555 forms a Glycyl lysine isopeptide (Lys-Gly) (interchain with G-Cter in ubiquitin) linkage. Mg(2+)-binding residues include Asp-634 and Asp-638. A helical membrane pass occupies residues 720-738 (DLIVFIAIFADVATLAIAY). At 739–754 (DNAPYSPKPVKWNLPR) the chain is on the extracellular side. The helical transmembrane segment at 755–774 (LWGMSIILGIVLAIGSWITL) threads the bilayer. The Cytoplasmic segment spans residues 775 to 824 (TTMFLPKGGIIQNFGAMNGIMFLQISLTENWLIFITRAAGPFWSSIPSWQ). The chain crosses the membrane as a helical span at residues 825–845 (LAGAVFAVDIIATMFTLFGWW). The Extracellular portion of the chain corresponds to 846–857 (SENWTDIVTVVR). The helical transmembrane segment at 858–874 (VWIWSIGIFCVLGGFYY) threads the bilayer. The Cytoplasmic portion of the chain corresponds to 875–918 (EMSTSEAFDRLMNGKPMKEKKSTRSVEDFMAAMQRVSTQHEKET). Ser-911 carries the phosphoserine modification. Residues Thr-912 and Thr-918 each carry the phosphothreonine modification.

It belongs to the cation transport ATPase (P-type) (TC 3.A.3) family. Type IIIA subfamily. In terms of assembly, interacts with its cargot receptor EXP1 for its transport within the cell and maturation. Post-translationally, phosphorylated on multiple Ser and Thr residues.

Its subcellular location is the cell membrane. The enzyme catalyses ATP + H2O + H(+)(in) = ADP + phosphate + 2 H(+)(out). Functionally, the plasma membrane ATPase of plants and fungi is a hydrogen ion pump. The proton gradient it generates drives the active transport of nutrients by H(+)-symport. The resulting external acidification and/or internal alkinization may mediate growth responses. In Saccharomyces cerevisiae (strain ATCC 204508 / S288c) (Baker's yeast), this protein is Plasma membrane ATPase 1 (PMA1).